Here is a 603-residue protein sequence, read N- to C-terminus: Myotubularin (603 aa).

Serine 13 and serine 18 each carry phosphoserine. The 69-residue stretch at 29–97 folds into the GRAM domain; it reads QDVSETVPRL…GVISRIEKMG (69 aa). A Myotubularin phosphatase domain is found at 163–538; that stretch reads GWTVYNPVEE…RHLELWVNYY (376 aa). A 1,2-diacyl-sn-glycero-3-phospho-(1D-myo-inositol-3,5-bisphosphate)-binding residues include asparagine 288, asparagine 313, and isoleucine 314. A 1,2-diacyl-sn-glycero-3-phospho-(1D-myo-inositol-3-phosphate) is bound by residues asparagine 288, asparagine 313, and isoleucine 314. The active-site Phosphocysteine intermediate is the cysteine 375. Serine 376, aspartate 377, glycine 378, tryptophan 379, aspartate 380, arginine 381, lysine 417, and arginine 421 together coordinate a 1,2-diacyl-sn-glycero-3-phospho-(1D-myo-inositol-3,5-bisphosphate). A 1,2-diacyl-sn-glycero-3-phospho-(1D-myo-inositol-3-phosphate) contacts are provided by serine 376, aspartate 377, glycine 378, tryptophan 379, aspartate 380, and arginine 381. Arginine 421 provides a ligand contact to a 1,2-diacyl-sn-glycero-3-phospho-(1D-myo-inositol-3-phosphate). A Phosphothreonine modification is found at threonine 495. The residue at position 588 (serine 588) is a Phosphoserine.

The protein belongs to the protein-tyrosine phosphatase family. Non-receptor class myotubularin subfamily. As to quaternary structure, heterodimer with MTMR12. Interacts with KMT2A/MLL1 (via SET domain). Interacts with DES in skeletal muscle but not in cardiac muscle. Interacts with SPEG. In terms of tissue distribution, widely expressed with highest levels detected in heart and muscle and low levels in brain (at protein level). Expressed in skeletal muscles (at protein level).

It localises to the cytoplasm. The protein localises to the cell membrane. It is found in the cell projection. Its subcellular location is the filopodium. The protein resides in the ruffle. It localises to the late endosome. The protein localises to the myofibril. It is found in the sarcomere. The catalysed reaction is a 1,2-diacyl-sn-glycero-3-phospho-(1D-myo-inositol-3-phosphate) + H2O = a 1,2-diacyl-sn-glycero-3-phospho-(1D-myo-inositol) + phosphate. It catalyses the reaction a 1,2-diacyl-sn-glycero-3-phospho-(1D-myo-inositol-3,5-bisphosphate) + H2O = a 1,2-diacyl-sn-glycero-3-phospho-(1D-myo-inositol-5-phosphate) + phosphate. The enzyme catalyses 1,2-dioctanoyl-sn-glycero-3-phospho-(1-D-myo-inositol-3-phosphate) + H2O = 1,2-dioctanoyl-sn-glycero-3-phospho-(1D-myo-inositol) + phosphate. It carries out the reaction 1,2-dioctanoyl-sn-glycero-3-phospho-(1D-myo-inositol-3,5-bisphosphate) + H2O = 1,2-dioctanoyl-sn-glycero-3-phospho-(1D-myo-inositol-5-phosphate) + phosphate. The catalysed reaction is 1,2-dihexadecanoyl-sn-glycero-3-phospho-(1D-myo-inositol-3,5-phosphate) + H2O = 1,2-dihexadecanoyl-sn-glycero-3-phospho-(1D-myo-inositol-5-phosphate) + phosphate. Allosterically activated by phosphatidylinositol 5-phosphate (PI5P). In terms of biological role, lipid phosphatase which dephosphorylates phosphatidylinositol 3-monophosphate (PI3P) and phosphatidylinositol 3,5-bisphosphate (PI(3,5)P2). Has also been shown to dephosphorylate phosphotyrosine- and phosphoserine-containing peptides. Negatively regulates EGFR degradation through regulation of EGFR trafficking from the late endosome to the lysosome. Plays a role in vacuolar formation and morphology. Regulates desmin intermediate filament assembly and architecture. Plays a role in mitochondrial morphology and positioning. Required for skeletal muscle maintenance but not for myogenesis. In skeletal muscles, stabilizes MTMR12 protein levels. The polypeptide is Myotubularin (Mus musculus (Mouse)).